Reading from the N-terminus, the 367-residue chain is MMKKRNTVYLSEDLIVEILSRVSAVSLARLRTTSKRWNALVKDERLAKKHSAYAPRQSLVITLIDSRVYLMNVSLQYGIEKVDLSAKLTGQFSLKDPLSNSLEEVDIRNVFHCDGLLLCSTKDNRLVVWNPCSGETRWIQPRSSYKVSDIYALGYDNTSSCHKILRMDRSEDRIPIQTEYQVYDFTSKSWLVDGVAGGLFIPSIGTRRRGLSVKGNTYWLALTEDGPPFDMFLLCFDFSTDGFRRLSLPTDTPCTYYDVSLSVTREEQQLCMFKSHGSELWIATKMESTGAISWSKSHRFHFRIDEMTVLADQEKPVFVYRFKPKSNMLHIVGEHIYIIQVDQHSADSKCPYLLTYVPSLVQIQQSI.

An F-box domain is found at 4–50; the sequence is KRNTVYLSEDLIVEILSRVSAVSLARLRTTSKRWNALVKDERLAKKH.

This chain is Putative F-box protein At3g21130, found in Arabidopsis thaliana (Mouse-ear cress).